Reading from the N-terminus, the 154-residue chain is Endoribonuclease YbeY (154 aa).

3 residues coordinate Zn(2+): His113, His117, and His123.

The protein belongs to the endoribonuclease YbeY family. The cofactor is Zn(2+).

The protein resides in the cytoplasm. Functionally, single strand-specific metallo-endoribonuclease involved in late-stage 70S ribosome quality control and in maturation of the 3' terminus of the 16S rRNA. The protein is Endoribonuclease YbeY of Vibrio vulnificus (strain CMCP6).